We begin with the raw amino-acid sequence, 188 residues long: Protein GrpE 2 (188 aa).

The protein belongs to the GrpE family. As to quaternary structure, homodimer.

The protein resides in the cytoplasm. Its function is as follows. Participates actively in the response to hyperosmotic and heat shock by preventing the aggregation of stress-denatured proteins, in association with DnaK and GrpE. It is the nucleotide exchange factor for DnaK and may function as a thermosensor. Unfolded proteins bind initially to DnaJ; upon interaction with the DnaJ-bound protein, DnaK hydrolyzes its bound ATP, resulting in the formation of a stable complex. GrpE releases ADP from DnaK; ATP binding to DnaK triggers the release of the substrate protein, thus completing the reaction cycle. Several rounds of ATP-dependent interactions between DnaJ, DnaK and GrpE are required for fully efficient folding. This Buchnera aphidicola subsp. Acyrthosiphon pisum (strain APS) (Acyrthosiphon pisum symbiotic bacterium) protein is Protein GrpE 2.